The sequence spans 234 residues: Probable Ufm1-specific protease 1 (234 aa).

Residues cysteine 70, aspartate 194, and histidine 196 contribute to the active site.

Belongs to the peptidase C78 family.

Thiol protease which recognizes and hydrolyzes the peptide bond at the C-terminal Gly of UFM1, a ubiquitin-like modifier protein bound to a number of target proteins. The polypeptide is Probable Ufm1-specific protease 1 (Drosophila melanogaster (Fruit fly)).